We begin with the raw amino-acid sequence, 1087 residues long: Synaptopodin-2 (1087 aa).

The 83-residue stretch at 6 to 88 (FICISMTGGA…SLHLLVKRPS (83 aa)) folds into the PDZ domain. 3 disordered regions span residues 24–52 (GKEEQQPLQVAKIRSQSKASGSGLREGDE), 88–112 (SSGTSETLDSESETTNHQHLTHEGP), and 207–272 (GPIV…AGLP). Over residues 101–112 (TTNHQHLTHEGP) the composition is skewed to basic and acidic residues. Composition is skewed to polar residues over residues 207–230 (GPIVTLQGNDKSTSPDPDWSSQLE) and 246–255 (TSLTSSTSSG). Phosphoserine is present on residues Ser-300, Ser-319, and Ser-320. The segment at 320-359 (SEGTEHGEDQRSGKDQSRPHKHRARHARLRRSESLSEKQV) is disordered. A compositionally biased stretch (basic and acidic residues) spans 322–337 (GTEHGEDQRSGKDQSR). Thr-323 bears the Phosphothreonine mark. Basic residues predominate over residues 338-348 (PHKHRARHARL). Basic and acidic residues predominate over residues 349 to 359 (RRSESLSEKQV). Residues 388 to 396 (KKRRRRARK) carry the Nuclear localization signal motif. Ser-540, Ser-541, Ser-543, and Ser-546 each carry phosphoserine. An interaction with YWHAB region spans residues 551-557 (RSLASVP). Ser-555 bears the Phosphoserine; by PKA mark. Disordered regions lie at residues 581–817 (AKPF…ALNL) and 832–863 (NYTPKPSAPTPLVNAAPAGAGGPSNELPGMSG). Position 596 is a phosphoserine (Ser-596). The interval 599 to 804 (RSVTSPISDF…AVSSIKIAQP (206 aa)) is interaction with YWHAB. Phosphothreonine; by PKA and CaMK2 is present on Thr-602. Ser-603 bears the Phosphoserine mark. Pro residues-rich tracts occupy residues 609–622 (PAPPPYSAVSPPPE) and 636–647 (AQPPPWPQPAPW). A PPPY motif motif is present at residues 611-614 (PPPY). At Tyr-614 the chain carries Phosphotyrosine. Phosphoserine is present on Ser-618. The tract at residues 656-796 (SEQIASRDER…PPNPPQVTAV (141 aa)) is F-actin binding. The segment at 656–909 (SEQIASRDER…LPASWKYSSN (254 aa)) is F-actin bundling activity. 2 interaction with ACTN2 regions span residues 656-917 (SEQI…PPVA) and 894-1087 (QSPT…VVEE). Phosphoserine is present on residues Ser-697 and Ser-719. Positions 740–893 (AKQKTPPPVA…DTVQAHTVRA (154 aa)) are actin binding. Thr-744 bears the Phosphothreonine mark. The span at 751–777 (KPAVKSPSSSQPVAPVSPVWSPGVAPA) shows a compositional bias: low complexity. 2 positions are modified to phosphoserine: Ser-767 and Ser-771. Over residues 781-797 (AFSTSNPPNPPQVTAVS) the composition is skewed to polar residues. Residues 803–1087 (QPAAPPARPA…QVWKPSVVEE (285 aa)) form an interaction with FLNC region. Ser-895, Ser-899, and Ser-903 each carry phosphoserine. 3 disordered regions span residues 930–952 (AIKSQPPGAQASKTSKKKGKKPL), 970–1012 (FTFQ…PTNA), and 1037–1060 (PVSASPVPVSVPTSPKQESTSTSY). The interaction with ZYX stretch occupies residues 993-1012 (PAMKQALPPRQANVGSPTNA). Phosphoserine occurs at positions 1008 and 1050. Residues 1037–1051 (PVSASPVPVSVPTSP) show a composition bias toward low complexity.

It belongs to the synaptopodin family. May self-associate in muscle cells under oxidative stress. Binds F-actin. Interacts with ACTN2; ACTN2 is proposed to anchor SYOP2 at Z lines in mature myocytes. Interacts with AKAP6, PPP3CA and CAMK2A. Interacts (phosphorylated form) with YWHAB; YWHAB competes with ACTN2 for interaction with SYNPO2. Interacts with KPNA2; mediating nuclear import of SYNOP2; dependent on interaction with YWHAB. Interacts with IPO13; may be implicated in SYNOP2 nuclear import. Interacts with ZYX, FLNC, ILK. Interacts with BAG3 (via WW 1 domain). May associate with the CASA complex consisting of HSPA8, HSPB8 and BAG3. Interacts with VPS18. Phosphorylated by PKA, and by CaMK2 at multiple sites. Dephosphorylated by calcineurin at Ser-555 and Thr-602; abrogating interaction with YWHAB and impairing nuclear import. As to expression, expressed in skeletal muscle, heart, colon, stomach, uterus and lung. Expression is restricted to muscle cell layers in colon, uterus and stomach.

The protein resides in the nucleus. Its subcellular location is the cytoplasm. It localises to the myofibril. It is found in the sarcomere. The protein localises to the z line. The protein resides in the cell junction. Its subcellular location is the focal adhesion. In terms of biological role, has an actin-binding and actin-bundling activity. Can induce the formation of F-actin networks. At the sarcomeric Z lines is proposed to act as adapter protein that links nascent myofibers to the sarcolemma via ZYX and may play a role in early assembly and stabilization of the Z lines. Involved in autophagosome formation. May play a role in chaperone-assisted selective autophagy (CASA) involved in Z lines maintenance in striated muscle under mechanical tension; may link the client-processing CASA chaperone machinery to a membrane-tethering and fusion complex providing autophagosome membranes. Involved in regulation of cell migration. May be a tumor suppressor. The protein is Synaptopodin-2 (Synpo2) of Mus musculus (Mouse).